A 402-amino-acid chain; its full sequence is Tryptophan synthase beta chain (402 aa).

Lys91 is modified (N6-(pyridoxal phosphate)lysine).

The protein belongs to the TrpB family. As to quaternary structure, tetramer of two alpha and two beta chains. It depends on pyridoxal 5'-phosphate as a cofactor.

It catalyses the reaction (1S,2R)-1-C-(indol-3-yl)glycerol 3-phosphate + L-serine = D-glyceraldehyde 3-phosphate + L-tryptophan + H2O. It participates in amino-acid biosynthesis; L-tryptophan biosynthesis; L-tryptophan from chorismate: step 5/5. In terms of biological role, the beta subunit is responsible for the synthesis of L-tryptophan from indole and L-serine. The chain is Tryptophan synthase beta chain from Streptococcus thermophilus (strain ATCC BAA-250 / LMG 18311).